Consider the following 780-residue polypeptide: LPS-assembly protein LptD (780 aa).

A signal peptide spans 1–24; that stretch reads MKKRFPTLLATLIWTALYSQHTLA.

This sequence belongs to the LptD family. In terms of assembly, component of the lipopolysaccharide transport and assembly complex. Interacts with LptE and LptA.

Its subcellular location is the cell outer membrane. Functionally, together with LptE, is involved in the assembly of lipopolysaccharide (LPS) at the surface of the outer membrane. The polypeptide is LPS-assembly protein LptD (Yersinia pseudotuberculosis serotype I (strain IP32953)).